A 363-amino-acid chain; its full sequence is Cytoskeleton protein RodZ (363 aa).

The Cytoplasmic segment spans residues 1-111; the sequence is MNTEASQDQT…LGKKHKKRDG (111 aa). Positions 19 to 79 constitute an HTH cro/C1-type domain; the sequence is LRQARESLGL…KLVHLPEDEL (61 aa). Positions 30–49 form a DNA-binding region, H-T-H motif; sequence QQTVAERLCLKVSTIRDIEE. The chain crosses the membrane as a helical; Signal-anchor for type II membrane protein span at residues 112 to 132; the sequence is WLMSFTWLIVLVVLGLTGAWW. Topologically, residues 133 to 363 are periplasmic; that stretch reads WQNHQAQQAE…RVARLTVGVE (231 aa). The segment at 151 to 277 is disordered; the sequence is SAQLSQNGGQ…PLPTADAGVS (127 aa). Positions 188–199 are enriched in polar residues; it reads PLTNHSVSAITN. Residues 200–225 show a composition bias toward low complexity; that stretch reads SAPTTSSVPTTSSATTSSVPTTSSVP. A compositionally biased stretch (polar residues) spans 226-243; that stretch reads KINSTEPVDTANTNTTMH. Over residues 247-259 the composition is skewed to low complexity; the sequence is AASAAVSPSQVPQ.

Belongs to the RodZ family.

Its subcellular location is the cell inner membrane. Functionally, cytoskeletal protein that is involved in cell-shape control through regulation of the length of the long axis. The protein is Cytoskeleton protein RodZ of Yersinia pseudotuberculosis serotype O:1b (strain IP 31758).